The following is a 562-amino-acid chain: Adenylate kinase isoenzyme 5 (562 aa).

Adenylate kinase stretches follow at residues 133–316 and 377–559; these read KIIL…MAVD and KIIF…TAID. 142–147 is an ATP binding site; sequence GSGKGT. The NMP 1 stretch occupies residues 162–193; it reads SVGELLRKKIHSTSSNRKWSLIAKIITTGELA. Residues R168, 191–193, 219–222, and Q226 contribute to the AMP site; these read ELA and GFPR. The interval 256–266 is LID 1; it reads KRAEQQGRPDD. R257 serves as a coordination point for ATP. The AMP site is built by R263 and R274. An ATP-binding site is contributed by 386–391; that stretch reads GSGKGT. Residues 406–435 form an NMP 2 region; that stretch reads STDELLQNELSSESGRSKLIRDIMERGELV. AMP contacts are provided by residues T407, 433–435, 462–465, and Q469; these read ELV and GYPR. An LID 2 region spans residues 499-509; the sequence is QRSRNSPQADD. ATP is bound at residue R500. Residue R517 coordinates AMP. Position 545 (G545) interacts with ATP.

This sequence belongs to the adenylate kinase family. As to quaternary structure, monomer.

The protein resides in the cytoplasm. The catalysed reaction is AMP + ATP = 2 ADP. It carries out the reaction a 2'-deoxyribonucleoside 5'-diphosphate + ATP = a 2'-deoxyribonucleoside 5'-triphosphate + ADP. It catalyses the reaction a ribonucleoside 5'-diphosphate + ATP = a ribonucleoside 5'-triphosphate + ADP. Nucleoside monophosphate (NMP) kinase that catalyzes the reversible transfer of the terminal phosphate group between nucleoside triphosphates and monophosphates. Active on AMP and dAMP with ATP as a donor. When GTP is used as phosphate donor, the enzyme phosphorylates AMP, CMP, and to a small extent dCMP. Also displays broad nucleoside diphosphate kinase activity. The polypeptide is Adenylate kinase isoenzyme 5 (Ak5) (Bos taurus (Bovine)).